A 736-amino-acid polypeptide reads, in one-letter code: Alpha-xylosidase A (736 aa).

Positions 1-18 are cleaved as a signal peptide; it reads MYFSSFLALGALVQAAAA. N-linked (GlcNAc...) asparagine glycans are attached at residues asparagine 24, asparagine 279, asparagine 332, and asparagine 376. Residue aspartate 413 is part of the active site. N-linked (GlcNAc...) asparagine glycosylation occurs at asparagine 471. The active-site Proton donor is the aspartate 505. N-linked (GlcNAc...) asparagine glycans are attached at residues asparagine 655, asparagine 676, asparagine 690, and asparagine 701.

It belongs to the glycosyl hydrolase 31 family.

The protein resides in the secreted. The catalysed reaction is Hydrolysis of terminal, non-reducing alpha-D-xylose residues with release of alpha-D-xylose.. In terms of biological role, catalyzes the liberation of alpha-xylose from the non-reducing terminal glucose of xyloglucan oligosaccharides. This chain is Alpha-xylosidase A, found in Aspergillus niger (strain ATCC MYA-4892 / CBS 513.88 / FGSC A1513).